The chain runs to 450 residues: Na(+)/H(+) antiporter NhaA 2 (450 aa).

Helical transmembrane passes span 43–63 (VGGAVLLVASAVALVWANSPW), 86–106 (LTLGTWAADGLLAVFFLVVGL), 124–144 (ALPMAAAVGGMVVPALIFVAV), 155–175 (GWAIPTATDIAFAVAVLAVIS), 185–205 (FLLTLAVVDDLLAVTVIAVFY), 208–228 (EINLTALGLSIVPLALFALCV), 234–254 (SWWLLLPLGVATWVLMHESGV), 258–278 (VAGVLLGFTVPVLRSVAAGGP), 299–319 (VAVPVFAFFAAGVAIGGVSGL), 326–346 (PITLGIILGLVVGKPVGIFLT), 364–384 (WIDVFGVALLAGIGFTVSLLI), and 398–418 (FVKVGVLTGSLVAALIAAVLL).

It belongs to the NhaA Na(+)/H(+) (TC 2.A.33) antiporter family.

Its subcellular location is the cell membrane. It carries out the reaction Na(+)(in) + 2 H(+)(out) = Na(+)(out) + 2 H(+)(in). Its function is as follows. Na(+)/H(+) antiporter that extrudes sodium in exchange for external protons. This is Na(+)/H(+) antiporter NhaA 2 from Mycobacterium sp. (strain KMS).